Consider the following 182-residue polypeptide: Ferritin heavy chain (182 aa).

An N-acetylmethionine modification is found at M1. T2 is modified (N-acetylthreonine; in Ferritin heavy chain, N-terminally processed). Residues 11–160 (QNYHQDAEAA…DHVTNLRKMG (150 aa)) enclose the Ferritin-like diiron domain. Fe cation contacts are provided by E28, E63, H66, E108, and Q142.

This sequence belongs to the ferritin family. In terms of assembly, oligomer of 24 subunits. There are two types of subunits: L (light) chain and H (heavy) chain. The major chain can be light or heavy, depending on the species and tissue type. The functional molecule forms a roughly spherical shell with a diameter of 12 nm and contains a central cavity into which the insoluble mineral iron core is deposited. Interacts with NCOA4; NCOA4 promotes targeting of the iron-binding ferritin complex to autolysosomes following starvation or iron depletion.

It localises to the cytoplasm. It is found in the cytoplasmic vesicle. Its subcellular location is the autophagosome. The protein resides in the autolysosome. It catalyses the reaction 4 Fe(2+) + O2 + 4 H(+) = 4 Fe(3+) + 2 H2O. Functionally, stores iron in a soluble, non-toxic, readily available form. Important for iron homeostasis. Has ferroxidase activity. Iron is taken up in the ferrous form and deposited as ferric hydroxides after oxidation. Also plays a role in delivery of iron to cells. Mediates iron uptake in capsule cells of the developing kidney. Degraded to release iron upon autophagy activation by nutrient starvation. The sequence is that of Ferritin heavy chain (Fth1) from Mus musculus (Mouse).